Here is a 345-residue protein sequence, read N- to C-terminus: MSTNLLESTPPFTQLRTGVLQKYTPGLLLCSIAVLIAMIVNHFFSGVSPLIVAIILGIILTNLIQLPASTSPGITLASKKLLRLGIVFLGLQLVFSDILSLGFPMLAVIVCIVAGGIFGTILMGHLLRMKPTQVLLIACGFSICGAAAVAGVEGVTDSEEEEVVTAVALVVIFGTLMIPFIPFATKVLGLSPEIGGMWAGGSIHEIAQVVAAGGVIGGGALGVAVVVKLARVLLLAPIAAILSFRQRRQGYTSPDGKRPPVVPLFILGFLAMVVLRSTVALPDEVIAAGGFLQTALLSAAMFGLGCGVKIQNLIHVGVKPFILAFGSTTLVTSIALAGTLLTHLG.

10 helical membrane-spanning segments follow: residues 15-37 (LRTG…VLIA), 44-66 (FSGV…LIQL), 81-103 (LLRL…SLGF), 105-124 (MLAV…ILMG), 134-156 (VLLI…EGVT), 163-185 (VVTA…PFAT), 205-227 (EIAQ…AVVV), 261-280 (VVPL…STVA), 285-307 (VIAA…LGCG), and 320-342 (PFIL…TLLT).

Belongs to the UPF0324 family.

The protein resides in the cell membrane. This is UPF0324 membrane protein Cgl0015/cg0018 from Corynebacterium glutamicum (strain ATCC 13032 / DSM 20300 / JCM 1318 / BCRC 11384 / CCUG 27702 / LMG 3730 / NBRC 12168 / NCIMB 10025 / NRRL B-2784 / 534).